The primary structure comprises 293 residues: Epimerase family protein SDR39U1 (293 aa).

NADP(+)-binding positions include 31 to 32 (SR), 58 to 59 (LA), Glu-77, Arg-82, and Val-160.

The protein belongs to the NAD(P)-dependent epimerase/dehydratase family. SDR39U1 subfamily.

Putative NADP-dependent oxidoreductase. In Mus musculus (Mouse), this protein is Epimerase family protein SDR39U1 (Sdr39u1).